Here is a 32-residue protein sequence, read N- to C-terminus: Yop proteins translocation protein A (32 aa).

This chain is Yop proteins translocation protein A (yscA), found in Yersinia enterocolitica serotype O:8 / biotype 1B (strain NCTC 13174 / 8081).